Here is an 85-residue protein sequence, read N- to C-terminus: ATP synthase subunit c (85 aa).

2 helical membrane-spanning segments follow: residues 10–30 (IAVG…FAIL) and 53–73 (FIIA…ALLF).

The protein belongs to the ATPase C chain family. F-type ATPases have 2 components, F(1) - the catalytic core - and F(0) - the membrane proton channel. F(1) has five subunits: alpha(3), beta(3), gamma(1), delta(1), epsilon(1). F(0) has three main subunits: a(1), b(2) and c(10-14). The alpha and beta chains form an alternating ring which encloses part of the gamma chain. F(1) is attached to F(0) by a central stalk formed by the gamma and epsilon chains, while a peripheral stalk is formed by the delta and b chains.

The protein resides in the cell inner membrane. Its function is as follows. F(1)F(0) ATP synthase produces ATP from ADP in the presence of a proton or sodium gradient. F-type ATPases consist of two structural domains, F(1) containing the extramembraneous catalytic core and F(0) containing the membrane proton channel, linked together by a central stalk and a peripheral stalk. During catalysis, ATP synthesis in the catalytic domain of F(1) is coupled via a rotary mechanism of the central stalk subunits to proton translocation. Functionally, key component of the F(0) channel; it plays a direct role in translocation across the membrane. A homomeric c-ring of between 10-14 subunits forms the central stalk rotor element with the F(1) delta and epsilon subunits. This Aliivibrio salmonicida (strain LFI1238) (Vibrio salmonicida (strain LFI1238)) protein is ATP synthase subunit c.